A 573-amino-acid polypeptide reads, in one-letter code: Methionine--tRNA ligase (573 aa).

The 'HIGH' region motif lies at 10-20 (PYVNSVPHLGN). Zn(2+) contacts are provided by Cys-143, Cys-146, Cys-156, and Cys-159. The short motif at 333–337 (KFSKS) is the 'KMSKS' region element. Lys-336 lines the ATP pocket.

It belongs to the class-I aminoacyl-tRNA synthetase family. MetG type 1 subfamily. Zn(2+) is required as a cofactor.

Its subcellular location is the cytoplasm. The catalysed reaction is tRNA(Met) + L-methionine + ATP = L-methionyl-tRNA(Met) + AMP + diphosphate. Is required not only for elongation of protein synthesis but also for the initiation of all mRNA translation through initiator tRNA(fMet) aminoacylation. The protein is Methionine--tRNA ligase of Saccharolobus solfataricus (strain ATCC 35092 / DSM 1617 / JCM 11322 / P2) (Sulfolobus solfataricus).